The following is a 499-amino-acid chain: Low-affinity inorganic phosphate transporter PitB (499 aa).

10 consecutive transmembrane segments (helical) span residues 5 to 25, 52 to 72, 94 to 114, 124 to 144, 155 to 175, 207 to 227, 233 to 253, 382 to 402, 430 to 450, and 473 to 493; these read FVGLDIYTGLLLLLALAFVLF, LAVVMAAFFNFFGVLLGGLSV, LAMVFSMLLAAIIWNLGTWFF, LIGAIIGIGLTNALLTGSSVM, IFSSLIVSPIVGLVIAGGLIF, PFWTRIALIVSAAGVAFSHGA, GIGLVMLVLVGIAPAGFVVNM, APVWIIMAVALALGIGTMIGW, AAVSIGLASYIGMPVSTTHVL, and ILMAWVFTLPAAIFLSGGLYW.

Belongs to the inorganic phosphate transporter (PiT) (TC 2.A.20) family. Pit subfamily.

It localises to the cell inner membrane. The enzyme catalyses phosphate(in) + H(+)(in) = phosphate(out) + H(+)(out). Low-affinity inorganic phosphate transporter. This chain is Low-affinity inorganic phosphate transporter PitB, found in Escherichia coli (strain K12).